A 192-amino-acid chain; its full sequence is MTEYILLLIGTVLVNNFVLVKFLGLCPFMGVSKKLETAIGMGLATTFVLTMASVCAYLVESYILEPLHIEYLRTMSFILVIAVVVQFTEMVVHKTSPTLYRLLGIFLPLITTNCAVLGVALLNINENHSFVESIIYGFGAAVGFSLVLILFASMRERISAADVPAPFKGASIAMITAGLMSLAFMGFTGLVK.

Helical transmembrane passes span 5–25 (ILLL…FLGL), 39–59 (IGMG…AYLV), 72–92 (LRTM…EMVV), 102–122 (LLGI…VALL), 134–154 (IIYG…FASM), and 171–191 (SIAM…TGLV).

This sequence belongs to the NqrDE/RnfAE family. As to quaternary structure, the complex is composed of six subunits: RnfA, RnfB, RnfC, RnfD, RnfE and RnfG.

It localises to the cell inner membrane. Part of a membrane-bound complex that couples electron transfer with translocation of ions across the membrane. The chain is Ion-translocating oxidoreductase complex subunit A from Vibrio vulnificus (strain CMCP6).